A 247-amino-acid chain; its full sequence is MQTHVLFEHPLNEKMRTWLRIEFLIQQMKALLPVSDHASALHFFRNVGDLLDVFERGDTRTELLKELERQQRKLQSWAEVPGVDNERIESLRHELKARSSMLMAAPRLGQTLREDRLIALVRQRLSIPGGCCSFDLPLLHVWLCSPQEERDVQVNSWLATLQPLTYTLDMILDLIRQSAPFRKQTSLNGFYQDNGDDADLLRLQLPLQEALYPQISGHKSRFAIRFMPLDSEHGRVPERFDFELACC.

It belongs to the ZapD family. As to quaternary structure, interacts with FtsZ.

The protein resides in the cytoplasm. Its function is as follows. Cell division factor that enhances FtsZ-ring assembly. Directly interacts with FtsZ and promotes bundling of FtsZ protofilaments, with a reduction in FtsZ GTPase activity. This is Cell division protein ZapD from Cronobacter sakazakii (strain ATCC BAA-894) (Enterobacter sakazakii).